The chain runs to 227 residues: MEATFFTLPSSTSHSYPFSLKSHFNNSLTLPTHPHFKPKSKNLTIRSAISRTKKEETVETVKQQLEDCYLLAGIGYKGLTVKQFQELRSQLPDTTKLLVAKNTLVLKAIEGTKWEALKPCMKGMNAWLFVHSEEIPAALKPYRTFQKEKKLEENDFTGAVFEGKFYGPEEFKALETLPTRAEIYAQLLGSLKGPASAVVGTIQAPARNLVMVLKAYVKKLEEEGGSQ.

The transit peptide at 1–47 (MEATFFTLPSSTSHSYPFSLKSHFNNSLTLPTHPHFKPKSKNLTIRS) directs the protein to the chloroplast.

Belongs to the universal ribosomal protein uL10 family. Part of the 50S ribosomal subunit.

The protein localises to the plastid. The protein resides in the chloroplast. In terms of biological role, this protein binds directly to 23S ribosomal RNA. The polypeptide is Large ribosomal subunit protein uL10c (RPL10) (Nicotiana tabacum (Common tobacco)).